A 253-amino-acid chain; its full sequence is U1 small nuclear ribonucleoprotein A (253 aa).

Positions 23–102 (VTIYINNLNE…KPMRIQYAKT (80 aa)) constitute an RRM 1 domain. Residues 111 to 140 (DGTFVPRERRKRNDEKPEKKQKREQHHDVS) form a disordered region. The RRM 2 domain occupies 179–253 (NILFVQNLPH…NQMLISYAKK (75 aa)).

Belongs to the RRM U1 A/B'' family. Component of the spliceosome where it is associated with snRNP U1.

It localises to the nucleus. Its subcellular location is the nucleolus. Functionally, involved in nuclear pre-mRNA splicing. In Oryza sativa subsp. indica (Rice), this protein is U1 small nuclear ribonucleoprotein A.